Reading from the N-terminus, the 94-residue chain is Large ribosomal subunit protein uL29 (94 aa).

Positions Ala65–Gly94 are disordered. Residues Arg73 to Gly94 show a composition bias toward basic residues.

This sequence belongs to the universal ribosomal protein uL29 family.

The polypeptide is Large ribosomal subunit protein uL29 (Leptospira interrogans serogroup Icterohaemorrhagiae serovar copenhageni (strain Fiocruz L1-130)).